Here is a 264-residue protein sequence, read N- to C-terminus: MAKMRISPELKKLIEKYRCVKDTEGMSPAKVYKLVGENENLYLKMTDSRYKGTTYDVEREKDMMLWLEGKLPVPKVLHFERHDGWSNLLMSEADGVLCSEEYEDEQSPEKIIELYAECIRLFHSIDISDCPYTNSLDSRLAELDYLLNNDLADVDCENWEEDTPFKDPRELYDFLKTEKPEEELVFSHGDLGDSNIFVKDGKVSGFIDLGRSGRADKWYDIAFCVRSIREDIGEEQYVELFFDLLGIKPDWEKIKYYILLDELF.

Residue aspartate 190 is the Proton acceptor of the active site.

It belongs to the aminoglycoside phosphotransferase family.

It carries out the reaction kanamycin A + ATP = kanamycin 3'-phosphate + ADP + H(+). Resistance to kanamycin and structurally-related aminoglycosides, including amikacin. The polypeptide is Aminoglycoside 3'-phosphotransferase (aphA) (Enterococcus faecalis (Streptococcus faecalis)).